A 163-amino-acid chain; its full sequence is Globin CTT-Z (163 aa).

The signal sequence occupies residues 1–16 (MKFFAVLALCIVGAIA). Residues 18–162 (PLTSDEAALV…VYTAVFQIVT (145 aa)) form the Globin domain. Heme b is bound by residues His-76 and His-111.

This sequence belongs to the globin family.

This is Globin CTT-Z (CTT-Z) from Chironomus thummi thummi (Midge).